We begin with the raw amino-acid sequence, 185 residues long: Transcription termination/antitermination protein NusG (185 aa).

One can recognise a KOW domain in the interval 133–161; that stretch reads PGEEVRVTEGPFADFNGTVEEVDYEKGRL.

This sequence belongs to the NusG family.

Its function is as follows. Participates in transcription elongation, termination and antitermination. The polypeptide is Transcription termination/antitermination protein NusG (Haemophilus influenzae (strain ATCC 51907 / DSM 11121 / KW20 / Rd)).